The primary structure comprises 557 residues: MAPRRRRHTRIAGLRVVGTATLVAATTLTACSGSAAAQIDYVVDGALVTYNTNTVIGAASAGAQAFARTLTGFGYHGPDGQVVADRDFGTVSVVEGSPLILDYQISDDAVYSDGRPVTCDDLVLAWAAQSGRFPGFDAATQAGYVDIANIECTAGQKKARVSFIPDRSVVDHSQLFTATSLMPSHVIADQLHIDVTAALLSNNVSAVEQIARLWNSTWDLKPGRSHDEVRSRFPSSGPYKIESVLDDGAVVLVANDRWWGTKAITKRITVWPQGADIQDRVNNRSVDVVDVAAGSSGSLVTPDSYQRTDYPSAGIEQLIFAPQGSLAQSRTRRALALCVPRDAIARDAGVPIANSRLSPATDDALTDADGAAEARQFGRVDPAAARDALGGTPLTVRIGYGRPNARLAATIGTIADACAPAGITVSDVTVDTPGPQALRDGKIDVLLASTGGATGSGSSGSCAMDAYDLHSGNGNNLSGYANAQIDGIISALAVSADPAERARLLAEAAPVLWDEMPTLPLYRQQRTLLMSTKMYAVSRNPTRWGAGWNMDRWALAR.

The first 30 residues, 1 to 30, serve as a signal peptide directing secretion; the sequence is MAPRRRRHTRIAGLRVVGTATLVAATTLTA. Cys31 carries N-palmitoyl cysteine lipidation. Cys31 carries the S-diacylglycerol cysteine lipid modification.

It to M.bovis Mb2616c and M.leprae ML0489.

The protein localises to the cell membrane. This is an uncharacterized protein from Mycobacterium tuberculosis (strain ATCC 25618 / H37Rv).